A 956-amino-acid chain; its full sequence is Bifunctional glutamine synthetase adenylyltransferase/adenylyl-removing enzyme (956 aa).

The tract at residues 1–450 (MENMSEQALP…YFKETVGGQE (450 aa)) is adenylyl removase. The interval 456–956 (EQWTAQLWSL…IYEQVLNNGQ (501 aa)) is adenylyl transferase.

Belongs to the GlnE family. Mg(2+) serves as cofactor.

It catalyses the reaction [glutamine synthetase]-O(4)-(5'-adenylyl)-L-tyrosine + phosphate = [glutamine synthetase]-L-tyrosine + ADP. The catalysed reaction is [glutamine synthetase]-L-tyrosine + ATP = [glutamine synthetase]-O(4)-(5'-adenylyl)-L-tyrosine + diphosphate. Involved in the regulation of glutamine synthetase GlnA, a key enzyme in the process to assimilate ammonia. When cellular nitrogen levels are high, the C-terminal adenylyl transferase (AT) inactivates GlnA by covalent transfer of an adenylyl group from ATP to specific tyrosine residue of GlnA, thus reducing its activity. Conversely, when nitrogen levels are low, the N-terminal adenylyl removase (AR) activates GlnA by removing the adenylyl group by phosphorolysis, increasing its activity. The regulatory region of GlnE binds the signal transduction protein PII (GlnB) which indicates the nitrogen status of the cell. This is Bifunctional glutamine synthetase adenylyltransferase/adenylyl-removing enzyme from Shewanella loihica (strain ATCC BAA-1088 / PV-4).